Reading from the N-terminus, the 417-residue chain is NADH-quinone oxidoreductase subunit D (417 aa).

This sequence belongs to the complex I 49 kDa subunit family. In terms of assembly, NDH-1 is composed of 14 different subunits. Subunits NuoB, C, D, E, F, and G constitute the peripheral sector of the complex.

The protein localises to the cell inner membrane. It catalyses the reaction a quinone + NADH + 5 H(+)(in) = a quinol + NAD(+) + 4 H(+)(out). In terms of biological role, NDH-1 shuttles electrons from NADH, via FMN and iron-sulfur (Fe-S) centers, to quinones in the respiratory chain. The immediate electron acceptor for the enzyme in this species is believed to be ubiquinone. Couples the redox reaction to proton translocation (for every two electrons transferred, four hydrogen ions are translocated across the cytoplasmic membrane), and thus conserves the redox energy in a proton gradient. In Burkholderia multivorans (strain ATCC 17616 / 249), this protein is NADH-quinone oxidoreductase subunit D.